The chain runs to 1165 residues: Pesticidal crystal protein Cry1Da (1165 aa).

Belongs to the delta endotoxin family.

Promotes colloidosmotic lysis by binding to the midgut epithelial cells of many lepidopteran larvae. This is Pesticidal crystal protein Cry1Da (cry1Da) from Bacillus thuringiensis subsp. aizawai.